A 220-amino-acid chain; its full sequence is Cell division protein DedD (220 aa).

The helical transmembrane segment at 9–29 threads the bilayer; that stretch reads LVGTIVLVALGVIVLPGLLDG. Disordered regions lie at residues 46-84 and 97-137; these read KAGD…AAPS and FEPE…EEKA. Residues 57–70 are compositionally biased toward low complexity; sequence PAATQALPTQPPEG. Positions 100-109 are enriched in pro residues; that stretch reads EPAPVAPPKP. 2 stretches are compositionally biased toward basic and acidic residues: residues 110 to 119 and 127 to 137; these read KPVEPPKPKV and PEPKPVVEEKA. The SPOR domain occupies 138-217; the sequence is APTGKAYVVQ…SGLSGVVMGY (80 aa).

Belongs to the DedD family.

Its subcellular location is the cell inner membrane. In terms of biological role, non-essential cell division protein that could be required for efficient cell constriction. This chain is Cell division protein DedD, found in Escherichia coli (strain K12).